A 591-amino-acid chain; its full sequence is Aspartate--tRNA(Asp/Asn) ligase (591 aa).

Residue Glu175 coordinates L-aspartate. The segment at 199 to 202 (QQFK) is aspartate. Arg221 and His453 together coordinate L-aspartate. 221-223 (RDE) lines the ATP pocket. ATP is bound at residue Glu486. Arg493 is a binding site for L-aspartate. 538 to 541 (GIDR) lines the ATP pocket.

The protein belongs to the class-II aminoacyl-tRNA synthetase family. Type 1 subfamily. Homodimer.

The protein localises to the cytoplasm. The enzyme catalyses tRNA(Asx) + L-aspartate + ATP = L-aspartyl-tRNA(Asx) + AMP + diphosphate. Functionally, aspartyl-tRNA synthetase with relaxed tRNA specificity since it is able to aspartylate not only its cognate tRNA(Asp) but also tRNA(Asn). Reaction proceeds in two steps: L-aspartate is first activated by ATP to form Asp-AMP and then transferred to the acceptor end of tRNA(Asp/Asn). The chain is Aspartate--tRNA(Asp/Asn) ligase from Cereibacter sphaeroides (strain ATCC 17029 / ATH 2.4.9) (Rhodobacter sphaeroides).